Consider the following 173-residue polypeptide: Putative pre-16S rRNA nuclease (173 aa).

It belongs to the YqgF nuclease family.

The protein localises to the cytoplasm. Could be a nuclease involved in processing of the 5'-end of pre-16S rRNA. In Psychrobacter cryohalolentis (strain ATCC BAA-1226 / DSM 17306 / VKM B-2378 / K5), this protein is Putative pre-16S rRNA nuclease.